The chain runs to 184 residues: Large ribosomal subunit protein uL6 (184 aa).

It belongs to the universal ribosomal protein uL6 family. Part of the 50S ribosomal subunit.

In terms of biological role, this protein binds to the 23S rRNA, and is important in its secondary structure. It is located near the subunit interface in the base of the L7/L12 stalk, and near the tRNA binding site of the peptidyltransferase center. This chain is Large ribosomal subunit protein uL6, found in Desulfitobacterium hafniense (strain Y51).